The chain runs to 225 residues: Uracil-DNA glycosylase (225 aa).

D61 acts as the Proton acceptor in catalysis.

Belongs to the uracil-DNA glycosylase (UDG) superfamily. UNG family.

It localises to the cytoplasm. It catalyses the reaction Hydrolyzes single-stranded DNA or mismatched double-stranded DNA and polynucleotides, releasing free uracil.. Its function is as follows. Excises uracil residues from the DNA which can arise as a result of misincorporation of dUMP residues by DNA polymerase or due to deamination of cytosine. The polypeptide is Uracil-DNA glycosylase (Actinobacillus pleuropneumoniae serotype 5b (strain L20)).